Consider the following 101-residue polypeptide: Large ribosomal subunit protein eL30 (101 aa).

It belongs to the eukaryotic ribosomal protein eL30 family.

The sequence is that of Large ribosomal subunit protein eL30 from Pyrobaculum neutrophilum (strain DSM 2338 / JCM 9278 / NBRC 100436 / V24Sta) (Thermoproteus neutrophilus).